We begin with the raw amino-acid sequence, 376 residues long: Cinnamyl alcohol dehydrogenase 2 (376 aa).

Cys-44 provides a ligand contact to Zn(2+). Ser-46 is a binding site for NADP(+). Zn(2+) contacts are provided by His-66, Glu-67, Cys-97, Cys-100, Cys-103, Cys-111, and Cys-161. NADP(+) is bound by residues Thr-165, 187-192 (GLGGLG), 210-215 (SRSSEK), Thr-250, Gly-274, and 297-299 (SQI).

It belongs to the zinc-containing alcohol dehydrogenase family. Homodimer. Requires Zn(2+) as cofactor. In terms of tissue distribution, expressed at the base of the stems.

The catalysed reaction is (E)-cinnamyl alcohol + NADP(+) = (E)-cinnamaldehyde + NADPH + H(+). The enzyme catalyses (E)-coniferol + NADP(+) = (E)-coniferaldehyde + NADPH + H(+). It carries out the reaction (E)-sinapyl alcohol + NADP(+) = (E)-sinapaldehyde + NADPH + H(+). It catalyses the reaction (E)-4-coumaroyl alcohol + NADP(+) = (E)-4-coumaraldehyde + NADPH + H(+). The catalysed reaction is (E)-caffeyl alcohol + NADP(+) = (E)-caffeyl aldehyde + NADPH + H(+). The protein operates within aromatic compound metabolism; phenylpropanoid biosynthesis. Involved in lignin biosynthesis. Catalyzes the final step specific for the production of lignin monomers. Catalyzes the NADPH-dependent reduction of coniferaldehyde, 5-hydroxyconiferaldehyde, sinapaldehyde, 4-coumaraldehyde and caffeyl aldehyde to their respective alcohols. The polypeptide is Cinnamyl alcohol dehydrogenase 2 (Arabidopsis thaliana (Mouse-ear cress)).